The sequence spans 325 residues: Brain mitochondrial carrier protein 1 (325 aa).

The next 6 helical transmembrane spans lie at Gly38–Ala54, Leu112–Leu128, Leu141–Pro161, Gly199–Leu215, Val240–Val256, and Gly298–Ile315. 3 Solcar repeats span residues Lys42–Leu131, Glu139–His224, and Asp233–Leu323.

This sequence belongs to the mitochondrial carrier (TC 2.A.29) family. In terms of assembly, homotetramer. As to expression, mainly expressed in brain. Some expression in testis and pituitary.

Its subcellular location is the mitochondrion inner membrane. The enzyme catalyses sulfite(in) + sulfate(out) = sulfite(out) + sulfate(in). The catalysed reaction is thiosulfate(in) + sulfate(out) = thiosulfate(out) + sulfate(in). It carries out the reaction sulfate(out) + phosphate(in) = sulfate(in) + phosphate(out). It catalyses the reaction oxalate(in) + sulfate(out) = oxalate(out) + sulfate(in). The enzyme catalyses malonate(in) + sulfate(out) = malonate(out) + sulfate(in). The catalysed reaction is maleate(in) + sulfate(out) = maleate(out) + sulfate(in). It carries out the reaction (S)-malate(in) + sulfate(out) = (S)-malate(out) + sulfate(in). It catalyses the reaction (3S)-citramalate(in) + sulfate(out) = (3S)-citramalate(out) + sulfate(in). The enzyme catalyses (3R)-citramalate(in) + sulfate(out) = (3R)-citramalate(out) + sulfate(in). The catalysed reaction is sulfate(out) + succinate(in) = sulfate(in) + succinate(out). It carries out the reaction (S,S)-tartrate(in) + sulfate(out) = (S,S)-tartrate(out) + sulfate(in). It catalyses the reaction (2R,3R)-tartrate(in) + sulfate(out) = (2R,3R)-tartrate(out) + sulfate(in). The enzyme catalyses D-aspartate(in) + sulfate(out) = D-aspartate(out) + sulfate(in). The catalysed reaction is L-aspartate(in) + sulfate(out) = L-aspartate(out) + sulfate(in). It carries out the reaction sulfate(in) = sulfate(out). It catalyses the reaction phosphate(in) = phosphate(out). The enzyme catalyses (S)-malate(out) = (S)-malate(in). The catalysed reaction is citrate(in) = citrate(out). It carries out the reaction L-aspartate(out) = L-aspartate(in). It catalyses the reaction L-glutamate(out) = L-glutamate(in). The enzyme catalyses H(+)(in) = H(+)(out). The catalysed reaction is chloride(in) = chloride(out). Increased activity at pH lower than 8.0. sulfate/sulfate exchange activity is inhibited strongly by pyridoxal 5'-phosphate, bathophenanthroline and the organic mercurials mersalyl, p-chloromercuribenzoate and HgCl2. Proton conductance is activated by cardiolipin and long-chain free fatty acids and inhibited by purine nucleotides ATP and ADP. Chloride ion transporter activity is inhibited by long-chain free fatty acids. Its function is as follows. Transports inorganic anions (sulfate, sulfite, thiosulfate and phosphate) and, to a lesser extent, a variety of dicarboxylates (e.g. malonate, malate and citramalate) and, even more so, aspartate and glutamate and tricarboxylates. May catalyze the export of sulfite and thiosulfate (the hydrogen sulfide degradation products) from the mitochondria, thereby modulating the level of the hydrogen sulfide. Also can mediate a very low unidirectional transport of anions including sulfate, phosphate, (S)-malate, citrate, L-aspartate and L-glutamate. Maintains oxidative balance (through uncoupling activities) and ATP production (by modifying mitochondrial membrane potential). Is able to transport protons across lipid membranes. Also exhibits transmembrane chloride transport activity to a lesser extent. May modify mitochondrial respiratory efficiency and mitochondrial oxidant production. This chain is Brain mitochondrial carrier protein 1, found in Homo sapiens (Human).